The sequence spans 152 residues: MEDEEVAESWEEAADSGEIDRRLEKKLKITQKESRKSKSPPKVPIVIQDDSVPSGPPPQIRILKRPATNGVLSNPNSTTRPAFPVKSLAQREAEYAEARKRILGSASPEEEQEKPILDRPTRISQPEDIRQPNNVIRQPLGPDGSQGFKQRR.

Disordered stretches follow at residues 30-86 (TQKE…FPVK) and 100-152 (KRIL…KQRR). An SUZ domain is found at 42–107 (KVPIVIQDDS…ARKRILGSAS (66 aa)). Polar residues predominate over residues 70 to 80 (GVLSNPNSTTR). The SUZ-C domain occupies 111–152 (EQEKPILDRPTRISQPEDIRQPNNVIRQPLGPDGSQGFKQRR). The segment covering 113 to 130 (EKPILDRPTRISQPEDIR) has biased composition (basic and acidic residues).

The protein belongs to the SZRD1 family.

This chain is SUZ RNA-binding domain-containing (SZRD1), found in Gallus gallus (Chicken).